Consider the following 164-residue polypeptide: Cyclic pyranopterin monophosphate synthase (164 aa).

Substrate is bound by residues 75–77 and 116–117; these read MCH and ME. Residue Asp-131 is part of the active site.

Belongs to the MoaC family. As to quaternary structure, homohexamer; trimer of dimers.

It carries out the reaction (8S)-3',8-cyclo-7,8-dihydroguanosine 5'-triphosphate = cyclic pyranopterin phosphate + diphosphate. Its pathway is cofactor biosynthesis; molybdopterin biosynthesis. Functionally, catalyzes the conversion of (8S)-3',8-cyclo-7,8-dihydroguanosine 5'-triphosphate to cyclic pyranopterin monophosphate (cPMP). The polypeptide is Cyclic pyranopterin monophosphate synthase (Staphylococcus aureus (strain Mu3 / ATCC 700698)).